The chain runs to 224 residues: UPF0758 protein Rpic_2712 (224 aa).

Residues 102–224 (TFESAQSVKD…VYGFLEHGKM (123 aa)) form the MPN domain. Residues H173, H175, and D186 each coordinate Zn(2+). Residues 173-186 (HNHPTGNTEPSESD) carry the JAMM motif motif.

Belongs to the UPF0758 family.

The protein is UPF0758 protein Rpic_2712 of Ralstonia pickettii (strain 12J).